Consider the following 96-residue polypeptide: MRTLVILAAILLVALQAQAEPLQARTDEATAAQEQIPTDNPEVVVSLAWDESLAPKDSVPGLRKNMACYCRIPACLAGERRYGTCFYRRRVWAFCC.

The first 19 residues, 1-19 (MRTLVILAAILLVALQAQA), serve as a signal peptide directing secretion. Positions 20–66 (EPLQARTDEATAAQEQIPTDNPEVVVSLAWDESLAPKDSVPGLRKNM) are excised as a propeptide. Intrachain disulfides connect Cys68–Cys96, Cys70–Cys85, and Cys75–Cys95.

It localises to the secreted. Functionally, has bacteriostatic activity against Gram-positive bacteria S.aureus and L.monocytogenes and Gram-negative bacterium E.coli and antifungal activity against C.neoformans. This chain is Neutrophil defensin 3, found in Macaca mulatta (Rhesus macaque).